Reading from the N-terminus, the 708-residue chain is Probable inactive lysine-specific demethylase JMJ19 (708 aa).

The disordered stretch occupies residues 35 to 59 (VPRDKESPRSVSRQEQTTGFGTDDK). The span at 43-54 (RSVSRQEQTTGF) shows a compositional bias: polar residues. The 42-residue stretch at 108-149 (APVFNPTEEEFRDTLSYISSLRDRAEPYGICCVVPPPSWKPP) folds into the JmjN domain. The region spanning 293–454 (SSGWNLNSTA…HGDIAVQVNQ (162 aa)) is the JmjC domain. 8 residues coordinate Zn(2+): C544, C547, C558, C560, C567, H570, C575, and C577. The segment at 544–581 (CCVCLGDLYLSAVNCSCSANRYSCLNHMRKLCACPCDR) adopts an RING-type; degenerate zinc-finger fold. Residues 646–653 (TRKDVAAG) carry the Nuclear localization signal motif. Residues 678–694 (AKETLESCSKKSNRPCD) are compositionally biased toward basic and acidic residues. The tract at residues 678–708 (AKETLESCSKKSNRPCDNDSSEANAPKKQKQ) is disordered.

Belongs to the JARID1 histone demethylase family. Expressed in inflorescences, roots, siliques, leaves and stems.

Its subcellular location is the nucleus. The chain is Probable inactive lysine-specific demethylase JMJ19 from Arabidopsis thaliana (Mouse-ear cress).